A 282-amino-acid polypeptide reads, in one-letter code: Virginiamycin B lyase (282 aa).

A substrate-binding site is contributed by histidine 217. Mg(2+) is bound at residue glutamate 256. Histidine 258 acts as the Proton acceptor in catalysis. Mg(2+) is bound at residue glutamate 273.

The protein belongs to the Vgb family. As to quaternary structure, monomer. The cofactor is Mg(2+).

Its function is as follows. Inactivates the type B streptogramin antibiotics by linearizing the lactone ring at the ester linkage, generating a free phenylglycine carboxylate and converting the threonyl moiety into 2-amino-butenoic acid. The protein is Virginiamycin B lyase of Mycolicibacterium smegmatis (strain ATCC 700084 / mc(2)155) (Mycobacterium smegmatis).